We begin with the raw amino-acid sequence, 161 residues long: Protein PLANT CADMIUM RESISTANCE 12 (161 aa).

The chain crosses the membrane as a helical span at residues Ala-71–Phe-89.

Belongs to the cornifelin family.

It localises to the membrane. May be involved in heavy metals transport. The polypeptide is Protein PLANT CADMIUM RESISTANCE 12 (PCR12) (Arabidopsis thaliana (Mouse-ear cress)).